A 196-amino-acid chain; its full sequence is Pro-FMRFamide-related neuropeptide VF (196 aa).

The N-terminal stretch at 1–26 is a signal peptide; sequence MEIISSKLFILLTLATSSLLTSNIFC. Positions 27–55 are excised as a propeptide; that stretch reads ADELVMSNLHSKENYDKYSEPRGYPKGER. Position 92 is a phenylalanine amide (F92). 2 propeptides span residues 95–99 and 115–121; these read NVQEE and NMEVSLV. F131 bears the Phenylalanine amide mark. The propeptide occupies 134–196; that stretch reads TTTAKSVCRM…IDDAELKQEK (63 aa).

It belongs to the FARP (FMRFamide related peptide) family. Specifically expressed in the retina. In terms of tissue distribution, detected in the hypothalamus.

It is found in the secreted. Efficiently inhibits forskolin-induced production of cAMP. Acts as a potent negative regulator of gonadotropin synthesis and secretion. Induces secretion of prolactin. In terms of biological role, efficiently inhibits forskolin-induced production of cAMP. Blocks morphine-induced analgesia. Its function is as follows. Shows no inhibitory activity of forskolin-induced production of cAMP. In Homo sapiens (Human), this protein is Pro-FMRFamide-related neuropeptide VF.